The following is a 686-amino-acid chain: CAI-1 autoinducer sensor kinase/phosphatase CqsS (686 aa).

Transmembrane regions (helical) follow at residues 21–41 (LVGWMGMLGFPAYYFIWEYWF), 47–64 (NLGLRCAAAVLFGGLVFR), 77–97 (GYFLFTIGFCLPFFFAFMMLM), 100–120 (WSTIWAMSFMASIFLHILLVH), 124–144 (VMALQALFSVLVAYLAVYGLT), and 152–172 (IEWQYIPIFLFTYVFGNLCFF). In terms of domain architecture, Histidine kinase spans 191–416 (GIAHEMRNPL…EFVLSFPRYD (226 aa)). A Phosphohistidine; by autocatalysis modification is found at histidine 194. A Response regulatory domain is found at 569–686 (RILVVDDNQS…VLLNKVAAWV (118 aa)). Aspartate 618 is modified (4-aspartylphosphate).

It is found in the cell membrane. It catalyses the reaction ATP + protein L-histidine = ADP + protein N-phospho-L-histidine.. Senses the quorum-sensing autoinducer CAI-1 ((S)-3-hydroxytridecan-4-one) which probably functions as an intragenus signal. The sensory signal is then relayed to LuxU and LuxO. This chain is CAI-1 autoinducer sensor kinase/phosphatase CqsS (cqsS), found in Vibrio cholerae serotype O1 (strain ATCC 39315 / El Tor Inaba N16961).